Consider the following 905-residue polypeptide: Probable cation-transporting ATPase F (905 aa).

A run of 3 helical transmembrane segments spans residues 84–104 (EFVD…VGFI), 248–268 (FSKF…GVGL), and 283–303 (ALAV…TLAI). Catalysis depends on Asp-333, which acts as the 4-aspartylphosphate intermediate. Mg(2+) contacts are provided by Asp-643 and Asp-647. The next 6 helical transmembrane spans lie at 716–736 (ILAA…ILWI), 738–758 (MTTA…AGIM), 778–798 (TLLV…WELD), 808–828 (TAAL…CRSL), 842–862 (WIIL…YLPA), and 872–892 (IDIG…IVVA).

The protein belongs to the cation transport ATPase (P-type) (TC 3.A.3) family. Type IIA subfamily.

The protein resides in the cell membrane. The enzyme catalyses ATP + H2O = ADP + phosphate + H(+). This chain is Probable cation-transporting ATPase F (ctpF), found in Mycobacterium bovis (strain ATCC BAA-935 / AF2122/97).